A 270-amino-acid chain; its full sequence is Phosphatidate cytidylyltransferase (270 aa).

The next 7 membrane-spanning stretches (helical) occupy residues 19–39 (LWLT…IGLA), 53–73 (TAFS…LLIL), 76–96 (GALL…VTQW), 101–121 (GWPA…SLLR), 126–146 (FGFT…IAAY), 183–203 (LVAS…ALLL), and 248–268 (ALLY…AIFF).

It belongs to the CDS family.

The protein localises to the cell inner membrane. It carries out the reaction a 1,2-diacyl-sn-glycero-3-phosphate + CTP + H(+) = a CDP-1,2-diacyl-sn-glycerol + diphosphate. The protein operates within phospholipid metabolism; CDP-diacylglycerol biosynthesis; CDP-diacylglycerol from sn-glycerol 3-phosphate: step 3/3. The protein is Phosphatidate cytidylyltransferase (cdsA) of Brucella suis biovar 1 (strain 1330).